The chain runs to 314 residues: A-kinase anchor protein 7 isoform gamma (314 aa).

Residues 1–46 (MPFAAVDIQDDCGSPDVPQANPKRSKEEEEDRGDKNDHVKKRKKAK) form a disordered region. Over residues 24 to 37 (RSKEEEEDRGDKND) the composition is skewed to basic and acidic residues. Residues T95 and 185 to 187 (HLT) each bind AMP. Residues T95 and 185–187 (HLT) contribute to the CMP site. Residues 260-314 (AELVRLSKRLVENAVLKAVQQYLEETQNKKQPGEGNSTKAEEGDRNGDGSDNNRK) form a PKA-RII-alpha subunit binding domain region. The tract at residues 261–285 (ELVRLSKRLVENAVLKAVQQYLEET) is RI-alpha-binding. Positions 262–275 (LVRLSKRLVENAVL) are RII-binding. A disordered region spans residues 281-314 (YLEETQNKKQPGEGNSTKAEEGDRNGDGSDNNRK). The segment covering 298 to 314 (KAEEGDRNGDGSDNNRK) has biased composition (basic and acidic residues).

In terms of assembly, binds cAMP-dependent protein kinase (PKA). Interacts with PRKCA; only the cytoplasmic form is capable of interacting with PRKCA. As to expression, expressed in oocytes.

It is found in the nucleus. The protein localises to the cytoplasm. Probably targets cAMP-dependent protein kinase (PKA) to the cellular membrane or cytoskeletal structures. The membrane-associated form reduces epithelial sodium channel (ENaC) activity, whereas the free cytoplasmic form may negatively regulate ENaC channel feedback inhibition by intracellular sodium. This chain is A-kinase anchor protein 7 isoform gamma, found in Mus musculus (Mouse).